Here is a 339-residue protein sequence, read N- to C-terminus: MVREEVAGSTQTLQWKCVESRVDSKRLYYGRFILSPLRKGQADTVGIALRRALLGEIEGTCITRAKFGSVPHEYSTIAGIEESVQEILLNLKEIVLRSNLYGVRDASICVKGPRYITAQDIILPPSVEIVDRAQPIANLTEPIDFCIDLQIKRDRGYQTELRKNYQDGSYPIDAVSMPVRNVNYSIFSCGNGNEKHEILFLEIWTNGSLTPKEALYEASRNLIDLFLPFLHAEEEGTSFEENKNRFTPPLFTFQKRLTNLKKNKKGIPLNCIFIDQLELTSRTYNCLKRANIHTLLDLLSKTEEDLLRIDSFRMEDRKHIWDTLEKHLPIDLLKNKLSF.

The interval 1-233 is alpha N-terminal domain (alpha-NTD); the sequence is MVREEVAGST…DLFLPFLHAE (233 aa). Residues 264–339 are alpha C-terminal domain (alpha-CTD); it reads KKGIPLNCIF…IDLLKNKLSF (76 aa).

It belongs to the RNA polymerase alpha chain family. In terms of assembly, in plastids the minimal PEP RNA polymerase catalytic core is composed of four subunits: alpha, beta, beta', and beta''. When a (nuclear-encoded) sigma factor is associated with the core the holoenzyme is formed, which can initiate transcription.

Its subcellular location is the plastid. The protein localises to the chloroplast. The enzyme catalyses RNA(n) + a ribonucleoside 5'-triphosphate = RNA(n+1) + diphosphate. Its function is as follows. DNA-dependent RNA polymerase catalyzes the transcription of DNA into RNA using the four ribonucleoside triphosphates as substrates. The sequence is that of DNA-directed RNA polymerase subunit alpha from Agropyron cristatum (Crested wheatgrass).